An 815-amino-acid chain; its full sequence is Leucine--tRNA ligase (815 aa).

Residues 42-52 (PYPSGRLHMGH) carry the 'HIGH' region motif. The 'KMSKS' region signature appears at 574 to 578 (KMSKS). Position 577 (lysine 577) interacts with ATP.

The protein belongs to the class-I aminoacyl-tRNA synthetase family.

Its subcellular location is the cytoplasm. It carries out the reaction tRNA(Leu) + L-leucine + ATP = L-leucyl-tRNA(Leu) + AMP + diphosphate. This chain is Leucine--tRNA ligase, found in Marinomonas sp. (strain MWYL1).